Reading from the N-terminus, the 946-residue chain is Protein TMA108 (946 aa).

Serine 2 carries the post-translational modification N-acetylserine. Position 293 to 297 (293 to 297 (MAMEN)) interacts with substrate. Histidine 330 lines the Zn(2+) pocket. Catalysis depends on glutamate 331, which acts as the Proton acceptor. Histidine 334 and glutamate 353 together coordinate Zn(2+).

The protein belongs to the peptidase M1 family. As to quaternary structure, associates with ribosomal complexes. Requires Zn(2+) as cofactor.

The protein localises to the cytoplasm. Putative zinc aminopeptidase which may be involved in ribosome biogenesis. The sequence is that of Protein TMA108 (TMA108) from Saccharomyces cerevisiae (strain ATCC 204508 / S288c) (Baker's yeast).